We begin with the raw amino-acid sequence, 238 residues long: tRNA (guanine-N(7)-)-methyltransferase (238 aa).

Positions 68, 93, 120, and 143 each coordinate S-adenosyl-L-methionine. Residue aspartate 143 is part of the active site. Substrate is bound by residues lysine 147, aspartate 179, and 216–219 (TKFE).

This sequence belongs to the class I-like SAM-binding methyltransferase superfamily. TrmB family.

The catalysed reaction is guanosine(46) in tRNA + S-adenosyl-L-methionine = N(7)-methylguanosine(46) in tRNA + S-adenosyl-L-homocysteine. It functions in the pathway tRNA modification; N(7)-methylguanine-tRNA biosynthesis. Catalyzes the formation of N(7)-methylguanine at position 46 (m7G46) in tRNA. This is tRNA (guanine-N(7)-)-methyltransferase from Shewanella sp. (strain MR-4).